Here is a 245-residue protein sequence, read N- to C-terminus: MSLQWTTVATFLYAEVFAVLLLCIPFISPKRWQKVFKSRLVELVVTYGNTFFVVLIVILVLLVIDAVREILKYDDVTEKVNLQNNPGAMEHFHMKLFRAQRNLYIAGFSLLLSFLLRRLVTLISQQATLLASNEAFKKQAESASEAAKKYMEENDQLKKGAAEDGDKLDIGNTEMKLEENKSLKNDLRKLKDELASTKKKLEKAENEALAMQKQSEGLTKEYDRLLEEHAKLQASVRGPSVKKEE.

The Lumenal portion of the chain corresponds to 2-6 (SLQWT). The helical transmembrane segment at 7-27 (TVATFLYAEVFAVLLLCIPFI) threads the bilayer. The Cytoplasmic segment spans residues 28-43 (SPKRWQKVFKSRLVEL). The chain crosses the membrane as a helical span at residues 44-64 (VVTYGNTFFVVLIVILVLLVI). The Lumenal portion of the chain corresponds to 65–102 (DAVREILKYDDVTEKVNLQNNPGAMEHFHMKLFRAQRN). The helical transmembrane segment at 103 to 123 (LYIAGFSLLLSFLLRRLVTLI) threads the bilayer. Topologically, residues 124 to 245 (SQQATLLASN…VRGPSVKKEE (122 aa)) are cytoplasmic. Residues 165–236 (GDKLDIGNTE…EEHAKLQASV (72 aa)) are a coiled coil. The Di-lysine motif motif lies at 242–245 (KKEE).

Belongs to the BCAP29/BCAP31 family. In terms of assembly, homodimer and heterodimer with BCAP29. Binds CASP8 (isoform 9) as a complex containing BCAP31, BCAP29, BCL2 and/or BCL2L1. Forms a complex (via C-terminus) with TOMM40 which mediates the translocation of components of the mitochondrial membrane respiratory chain NADH dehydrogenase (Complex I) from the cytosol to the mitochondria; within the complex BCAP31 interacts directly with unprocessed and processed NDUFS4 and NDUFB11. Interacts with VDAC1. Interacts with VAMP3, VAMP1 and membrane IgD immunoglobulins. Interacts with HACD2. Interacts with DNM1L; may form part of a larger protein complex at the endoplasmic reticulum-mitochondrial interface during mitochondrial fission. In terms of processing, cleaved by CASP8 and other caspases. In terms of tissue distribution, ubiquitous.

It is found in the endoplasmic reticulum membrane. The protein resides in the endoplasmic reticulum-Golgi intermediate compartment membrane. Its function is as follows. Functions as a chaperone protein. Is one of the most abundant endoplasmic reticulum (ER) proteins. Plays a role in the export of secreted proteins in the ER, the recognition of abnormally folded protein and their targeting to the ER associated-degradation (ERAD). Also serves as a cargo receptor for the export of transmembrane proteins. Plays a role in the assembly of the mitochondrial membrane respiratory chain NADH dehydrogenase (Complex I) by stimulating the translocation of NDUFS4 and NDUFB11 from the cytosol to the mitochondria via interaction with TOMM40. In response to ER stress, delocalizes from the ER-mitochondria contact sites and binds BCL2. May be involved in CASP8-mediated apoptosis. The sequence is that of B-cell receptor-associated protein 31 (Bcap31) from Mus musculus (Mouse).